A 193-amino-acid polypeptide reads, in one-letter code: Protein hunchback (193 aa).

Residues 18–31 (HLHHHHAHHSHHRH) show a composition bias toward basic residues. Disordered regions lie at residues 18–57 (HLHHHHAHHSHHRHDSNSNSNASSPHQSPLPSPNPPSNTN) and 153–193 (LTPP…KYMA). Positions 34 to 44 (NSNSNASSPHQ) are enriched in low complexity. Residues 174–193 (EPEKEHDLMSNSSEDMKYMA) are compositionally biased toward basic and acidic residues.

Belongs to the hunchback C2H2-type zinc-finger protein family.

The protein resides in the nucleus. Its function is as follows. Gap class segmentation protein that controls development of head structures. In Drosophila petalopeza (Fruit fly), this protein is Protein hunchback (hb).